A 425-amino-acid chain; its full sequence is Histone-binding protein RBBP7 (425 aa).

An N-acetylalanine modification is found at Ala-2. At Ser-3 the chain carries Phosphoserine. Position 4 is an N6-acetyllysine; alternate (Lys-4). Residue Lys-4 forms a Glycyl lysine isopeptide (Lys-Gly) (interchain with G-Cter in SUMO2); alternate linkage. Lys-4 participates in a covalent cross-link: Glycyl lysine isopeptide (Lys-Gly) (interchain with G-Cter in ubiquitin); alternate. Thr-10 carries the phosphothreonine modification. WD repeat units lie at residues 47-122 (QWLP…KINH), 128-173 (RARY…LRLR), 181-217 (GLSW…KIVD), 228-269 (VVED…HLVD), 275-312 (VNCL…LHTF), 318-369 (EIFQ…LFIH), and 376-403 (ISDF…IWQM). Ser-95 is modified (phosphoserine). A Glycyl lysine isopeptide (Lys-Gly) (interchain with G-Cter in SUMO2) cross-link involves residue Lys-101. Lys-119 carries the N6-acetyllysine modification. Lys-155 is covalently cross-linked (Glycyl lysine isopeptide (Lys-Gly) (interchain with G-Cter in SUMO2)). Lys-159 is modified (N6-acetyllysine; alternate). Residue Lys-159 forms a Glycyl lysine isopeptide (Lys-Gly) (interchain with G-Cter in SUMO2); alternate linkage. A Phosphoserine modification is found at Ser-354.

The protein belongs to the WD repeat RBAP46/RBAP48/MSI1 family. As to quaternary structure, binds directly to helix 1 of the histone fold of histone H4, a region that is not accessible when H4 is in chromatin. Subunit of the type B histone acetyltransferase (HAT) complex, composed of RBBP7 and HAT1. Subunit of the core histone deacetylase (HDAC) complex, which is composed of HDAC1, HDAC2, RBBP4 and RBBP7. The core HDAC complex associates with SIN3A, ARID4B/SAP180, SAP18, SAP30, SAP130, SUDS3/SAP45 and possibly ARID4A/RBP1 and ING1 to form the SIN3 HDAC complex. Component of the nucleosome remodeling and deacetylase (NuRD) repressor complex, composed of core proteins MTA1, MTA2, MTA3, RBBP4, RBBP7, HDAC1, HDAC2, MBD2, MBD3, and peripherally associated proteins CDK2AP1, CDK2AP2, GATAD2A, GATAD2B, CHD3, CHD4 and CHD5. The exact stoichiometry of the NuRD complex is unknown, and some subunits such as MBD2 and MBD3, GATAD2A and GATAD2B, and CHD3, CHD4 and CHD5 define mutually exclusive NuRD complexes. The NuRD complex may interact with MBD3L1. The NuRD complex may interact with MBD3L2. Subunit of the PRC2/EED-EZH2 complex, which is composed of at least EED, EZH2, RBBP4, RBBP7 and SUZ12. The PRC2/EED-EZH2 complex may also associate with HDAC1. Component of the NURF-1 ISWI chromatin remodeling complex (also called the nucleosome-remodeling factor (NURF) complex) at least composed of SMARCA1, BPTF, RBBP4 and RBBP7. Within the complex interacts with SMARCA1. Component of the BPFT-SMARCA1 complex at least composed of SMARCA1, BPFT, RBBP4 and RBBP7; the complex is catalytically inactive and does not remodel chromatin. Within the complex interacts with SMARCA1. Interacts with BRCA1. Interacts with CDK2AP1. Interacts with CENPA. Interacts with CHD3. Interacts with CHD4. Interacts with CREBBP, and this interaction may be enhanced by the binding of phosphorylated CREB1 to CREBBP. Interacts with HDAC7. Interacts with MTA1. Interacts with PWWP2B. Interacts with RB1 (via viral protein-binding domain). Interacts with SUV39H1.

The protein localises to the nucleus. Functionally, core histone-binding subunit that may target chromatin remodeling factors, histone acetyltransferases and histone deacetylases to their histone substrates in a manner that is regulated by nucleosomal DNA. Component of several complexes which regulate chromatin metabolism. These include the type B histone acetyltransferase (HAT) complex, which is required for chromatin assembly following DNA replication; the core histone deacetylase (HDAC) complex, which promotes histone deacetylation and consequent transcriptional repression; the nucleosome remodeling and histone deacetylase complex (the NuRD complex), which promotes transcriptional repression by histone deacetylation and nucleosome remodeling; and the PRC2/EED-EZH2 complex, which promotes repression of homeotic genes during development; and the NURF (nucleosome remodeling factor) complex. This is Histone-binding protein RBBP7 (RBBP7) from Bos taurus (Bovine).